The primary structure comprises 368 residues: GTPase Obg (368 aa).

Residues 1-161 (MRFVDEATIT…RSLRLELKIL (161 aa)) form the Obg domain. The region spanning 162 to 337 (ADAGLLGLPN…VVAEMWRMRD (176 aa)) is the OBG-type G domain. GTP contacts are provided by residues 168–175 (GLPNAGKS), 193–197 (FTTLI), 217–220 (DIPG), 290–293 (NKID), and 318–320 (SAL). Residues S175 and T195 each coordinate Mg(2+).

The protein belongs to the TRAFAC class OBG-HflX-like GTPase superfamily. OBG GTPase family. As to quaternary structure, monomer. Mg(2+) is required as a cofactor.

Its subcellular location is the cytoplasm. Functionally, an essential GTPase which binds GTP, GDP and possibly (p)ppGpp with moderate affinity, with high nucleotide exchange rates and a fairly low GTP hydrolysis rate. Plays a role in control of the cell cycle, stress response, ribosome biogenesis and in those bacteria that undergo differentiation, in morphogenesis control. The chain is GTPase Obg from Nitratidesulfovibrio vulgaris (strain DSM 19637 / Miyazaki F) (Desulfovibrio vulgaris).